Reading from the N-terminus, the 272-residue chain is 2-succinyl-6-hydroxy-2,4-cyclohexadiene-1-carboxylate synthase (272 aa).

The protein belongs to the AB hydrolase superfamily. MenH family. As to quaternary structure, monomer.

It carries out the reaction 5-enolpyruvoyl-6-hydroxy-2-succinyl-cyclohex-3-ene-1-carboxylate = (1R,6R)-6-hydroxy-2-succinyl-cyclohexa-2,4-diene-1-carboxylate + pyruvate. The protein operates within quinol/quinone metabolism; 1,4-dihydroxy-2-naphthoate biosynthesis; 1,4-dihydroxy-2-naphthoate from chorismate: step 3/7. Its pathway is quinol/quinone metabolism; menaquinone biosynthesis. Catalyzes a proton abstraction reaction that results in 2,5-elimination of pyruvate from 2-succinyl-5-enolpyruvyl-6-hydroxy-3-cyclohexene-1-carboxylate (SEPHCHC) and the formation of 2-succinyl-6-hydroxy-2,4-cyclohexadiene-1-carboxylate (SHCHC). In Yersinia pestis (strain Pestoides F), this protein is 2-succinyl-6-hydroxy-2,4-cyclohexadiene-1-carboxylate synthase.